Here is a 404-residue protein sequence, read N- to C-terminus: Homocysteine-responsive endoplasmic reticulum-resident ubiquitin-like domain member 2 protein (404 aa).

Residues 10–89 form the Ubiquitin-like domain; that stretch reads VTLIIKAPNQ…HMVHLVCASR (80 aa). The disordered stretch occupies residues 86–153; that stretch reads CASRSPPSSP…TLSQAQTDPA (68 aa). Low complexity-rich tracts occupy residues 88–97 and 109–126; these read SRSPPSSPKS and SSTS…PSPS. Positions 127 to 153 are enriched in polar residues; that stretch reads QESLSLVTGSSEGLRQRTLSQAQTDPA. A helical membrane pass occupies residues 301–321; sequence FIMVMGAMLLVYLHQAGWFPF.

It localises to the membrane. Could be involved in the unfolded protein response (UPR) pathway. The chain is Homocysteine-responsive endoplasmic reticulum-resident ubiquitin-like domain member 2 protein (Herpud2) from Mus musculus (Mouse).